The following is a 70-amino-acid chain: Small ribosomal subunit protein bS21 (70 aa).

The protein belongs to the bacterial ribosomal protein bS21 family.

This chain is Small ribosomal subunit protein bS21, found in Sulfurimonas denitrificans (strain ATCC 33889 / DSM 1251) (Thiomicrospira denitrificans (strain ATCC 33889 / DSM 1251)).